The sequence spans 394 residues: Elongation factor Tu (394 aa).

The region spanning 10–204 (KEHANIGTIG…AVDDYIPTPE (195 aa)) is the tr-type G domain. A G1 region spans residues 19 to 26 (GHVDHGKT). Residue 19–26 (GHVDHGKT) participates in GTP binding. T26 serves as a coordination point for Mg(2+). Residues 60-64 (GITIN) are G2. The segment at 81–84 (DCPG) is G3. GTP-binding positions include 81 to 85 (DCPGH) and 136 to 139 (NKVD). Residues 136 to 139 (NKVD) form a G4 region. The segment at 174–176 (SAL) is G5.

The protein belongs to the TRAFAC class translation factor GTPase superfamily. Classic translation factor GTPase family. EF-Tu/EF-1A subfamily. In terms of assembly, monomer.

Its subcellular location is the cytoplasm. It carries out the reaction GTP + H2O = GDP + phosphate + H(+). In terms of biological role, GTP hydrolase that promotes the GTP-dependent binding of aminoacyl-tRNA to the A-site of ribosomes during protein biosynthesis. The sequence is that of Elongation factor Tu from Staphylococcus haemolyticus (strain JCSC1435).